Consider the following 312-residue polypeptide: Putative S-adenosyl-L-methionine-dependent methyltransferase BCG_1768c (312 aa).

Residues aspartate 130 and 159–160 (DL) contribute to the S-adenosyl-L-methionine site.

It belongs to the UPF0677 family.

In terms of biological role, exhibits S-adenosyl-L-methionine-dependent methyltransferase activity. This Mycobacterium bovis (strain BCG / Pasteur 1173P2) protein is Putative S-adenosyl-L-methionine-dependent methyltransferase BCG_1768c.